The chain runs to 601 residues: Glutamine--fructose-6-phosphate aminotransferase [isomerizing] (601 aa).

Cys2 (nucleophile; for GATase activity) is an active-site residue. Residues 2 to 218 enclose the Glutamine amidotransferase type-2 domain; it reads CGIVGYIGYD…DHEIVIVKKD (217 aa). 2 SIS domains span residues 284–423 and 453–591; these read IIND…EHGR and IATD…VDKP. Lys596 (for Fru-6P isomerization activity) is an active-site residue.

As to quaternary structure, homodimer.

It is found in the cytoplasm. The enzyme catalyses D-fructose 6-phosphate + L-glutamine = D-glucosamine 6-phosphate + L-glutamate. Catalyzes the first step in hexosamine metabolism, converting fructose-6P into glucosamine-6P using glutamine as a nitrogen source. The polypeptide is Glutamine--fructose-6-phosphate aminotransferase [isomerizing] (Staphylococcus aureus (strain MRSA252)).